The sequence spans 930 residues: Translation initiation factor IF-2 (930 aa).

Positions 29-316 (GEFVKSASST…GRKSKRAKRA (288 aa)) are disordered. Positions 81–120 (RPGPKPGPPVAQQPAAPAAPPAAPPAPPTPAAAPPSPAPA) are enriched in pro residues. The span at 121-135 (APAAATPAEPAAPSA) shows a compositional bias: low complexity. 2 stretches are compositionally biased toward pro residues: residues 136-155 (RPGP…PGAP) and 180-191 (PRPQGPGGPRPG). Gly residues predominate over residues 192–204 (PGAGGPRPGGGPR). Pro residues predominate over residues 228–240 (GGGPRPGGGPRPT). The span at 241–301 (PGGAGRPGGG…GAAGAFGRPG (61 aa)) shows a compositional bias: gly residues. A compositionally biased stretch (basic residues) spans 305–314 (KRGRKSKRAK). The tr-type G domain occupies 426-598 (IRPPVVTVMG…VILTADASLD (173 aa)). Positions 435–442 (GHVDHGKT) are G1. Position 435–442 (435–442 (GHVDHGKT)) interacts with GTP. The G2 stretch occupies residues 460-464 (GITQH). The segment at 485–488 (DTPG) is G3. GTP contacts are provided by residues 485–489 (DTPGH) and 539–542 (NKID). Residues 539-542 (NKID) are G4. Positions 575–577 (SAK) are G5.

This sequence belongs to the TRAFAC class translation factor GTPase superfamily. Classic translation factor GTPase family. IF-2 subfamily.

Its subcellular location is the cytoplasm. Its function is as follows. One of the essential components for the initiation of protein synthesis. Protects formylmethionyl-tRNA from spontaneous hydrolysis and promotes its binding to the 30S ribosomal subunits. Also involved in the hydrolysis of GTP during the formation of the 70S ribosomal complex. The chain is Translation initiation factor IF-2 from Mycolicibacterium vanbaalenii (strain DSM 7251 / JCM 13017 / BCRC 16820 / KCTC 9966 / NRRL B-24157 / PYR-1) (Mycobacterium vanbaalenii).